Consider the following 327-residue polypeptide: DNA-directed RNA polymerase subunit alpha (327 aa).

The tract at residues 1–233 (MVREKVKVST…NLFIPFLHVE (233 aa)) is alpha N-terminal domain (alpha-NTD). Residues 267-327 (LAFQYIFIDQ…KKILDILEKK (61 aa)) form an alpha C-terminal domain (alpha-CTD) region.

It belongs to the RNA polymerase alpha chain family. In terms of assembly, in plastids the minimal PEP RNA polymerase catalytic core is composed of four subunits: alpha, beta, beta', and beta''. When a (nuclear-encoded) sigma factor is associated with the core the holoenzyme is formed, which can initiate transcription.

It localises to the plastid. It is found in the chloroplast. It catalyses the reaction RNA(n) + a ribonucleoside 5'-triphosphate = RNA(n+1) + diphosphate. DNA-dependent RNA polymerase catalyzes the transcription of DNA into RNA using the four ribonucleoside triphosphates as substrates. The sequence is that of DNA-directed RNA polymerase subunit alpha from Lobularia maritima (Sweet alyssum).